The sequence spans 175 residues: Large ribosomal subunit protein uL10 (175 aa).

The protein belongs to the universal ribosomal protein uL10 family. As to quaternary structure, part of the ribosomal stalk of the 50S ribosomal subunit. The N-terminus interacts with L11 and the large rRNA to form the base of the stalk. The C-terminus forms an elongated spine to which L12 dimers bind in a sequential fashion forming a multimeric L10(L12)X complex.

Functionally, forms part of the ribosomal stalk, playing a central role in the interaction of the ribosome with GTP-bound translation factors. The sequence is that of Large ribosomal subunit protein uL10 from Delftia acidovorans (strain DSM 14801 / SPH-1).